A 1122-amino-acid polypeptide reads, in one-letter code: AP-4 complex subunit epsilon-1 (1122 aa).

Position 699 is a phosphoserine (Ser-699). 2 stretches are compositionally biased toward basic and acidic residues: residues 714 to 728 (YLPK…KPEA) and 745 to 760 (TTRK…STEE). 2 disordered regions span residues 714–760 (YLPK…STEE) and 797–861 (SKLK…AEKL). The tract at residues 726–1122 (PEASHVPAEG…CHCQKVMQTS (397 aa)) is interaction with TEPSIN. Over residues 841 to 853 (ELSSELFRSESLS) the composition is skewed to low complexity. Ser-851 is subject to Phosphoserine.

This sequence belongs to the adaptor complexes large subunit family. As to quaternary structure, adaptor protein complex 4 (AP-4) is a heterotetramer composed of two large adaptins (epsilon-type subunit AP4E1 and beta-type subunit AP4B1), a medium adaptin (mu-type subunit AP4M1) and a small adaptin (sigma-type AP4S1). Interacts with TEPSIN. Interacts with GRIA2; probably indirect it mediates the somatodendritic localization of GRIA2 in neurons.

Its subcellular location is the golgi apparatus. The protein localises to the trans-Golgi network membrane. Functionally, component of the adaptor protein complex 4 (AP-4). Adaptor protein complexes are vesicle coat components involved both in vesicle formation and cargo selection. They control the vesicular transport of proteins in different trafficking pathways. AP-4 forms a non clathrin-associated coat on vesicles departing the trans-Golgi network (TGN) and may be involved in the targeting of proteins from the trans-Golgi network (TGN) to the endosomal-lysosomal system. It is also involved in protein sorting to the basolateral membrane in epithelial cells and the proper asymmetric localization of somatodendritic proteins in neurons. AP-4 is involved in the recognition and binding of tyrosine-based sorting signals found in the cytoplasmic part of cargos, but may also recognize other types of sorting signal. The sequence is that of AP-4 complex subunit epsilon-1 from Mus musculus (Mouse).